Here is a 748-residue protein sequence, read N- to C-terminus: MFEATATIDNGSFGTRTIRFETGRLAQQAAGAVVAYLDDENMLLSATTASKSPKEHFDFFPLTVDVEERMYAAGRIPGSFFRREGRPSTDAILTCRLIDRPLRPSFVDGLRNEIQVVVTILSLDPNDLYDVLAINAASASTQLGGLPFSGPIGGVRVALIDGTWVAFPTVEQLERAVFDMVVAGRKVDGADGPDVAIMMVEAEATSNVIELIDGGAQAPTETVVAQGLEAAKPFIEVLCTAQQELADKAARPTSDYPTFPDYGDDVYYSVASVATDELSKALTIGGKAERDARTDELKAEVLARLAETYEGREKEVSAAFRSLTKKLVRQRILTDHFRIDGRGITDIRALSAEVAVVPRAHGSALFQRGETQILGVTTLDMVKMAQQIDSLGPETTKRYMHHYNFPPFSTGETGRVGSPKRREIGHGALAERALVPVLPSLEDFPYAIRQVSEALGSNGSTSMGSVCASTLALLNAGVPLKAPVAGIAMGLVSDDIEVEAGDGTKSLERRFVTLTDILGAEDAFGDMDFKVAGTKDFVTALQLDTKLDGIPSQVLAGALSQAKDARLTILEVMAEAIDEPDEMSPYAPRVTTIRVPVDKIGEVIGPKGKIINAITEETGAQISIEDDGTVFVGATDGPSAQAAIDRINAIANPQLPTVGERFLGTVVKTTDFGAFVSLLPGRDGLVHISKLGKGKRIAKVEDVVNVGDKLRVEIADIDKRGKISLVLVEEDNSAPADAPAAAPADATS.

The Mg(2+) site is built by D522 and D528. Residues 588–647 (PRVTTIRVPVDKIGEVIGPKGKIINAITEETGAQISIEDDGTVFVGATDGPSAQAAIDRI) enclose the KH domain. Residues 659–728 (GERFLGTVVK…KRGKISLVLV (70 aa)) enclose the S1 motif domain.

It belongs to the polyribonucleotide nucleotidyltransferase family. The cofactor is Mg(2+).

It is found in the cytoplasm. It carries out the reaction RNA(n+1) + phosphate = RNA(n) + a ribonucleoside 5'-diphosphate. In terms of biological role, involved in mRNA degradation. Catalyzes the phosphorolysis of single-stranded polyribonucleotides processively in the 3'- to 5'-direction. This chain is Polyribonucleotide nucleotidyltransferase, found in Mycobacterium avium (strain 104).